The sequence spans 327 residues: Tartrate-resistant acid phosphatase type 5 (327 aa).

Positions 1 to 22 (MDTWMVLLGLQILLLPLLAHCT) are cleaved as a signal peptide. Fe cation is bound by residues D35, D73, Y76, and N112. N118 and N149 each carry an N-linked (GlcNAc...) asparagine glycan. C163 and C221 are joined by a disulfide. H207, H242, and H244 together coordinate Fe cation.

As to quaternary structure, exists either as monomer or, after proteolytic processing, as a dimer of two chains linked by disulfide bond(s). It depends on Fe cation as a cofactor. In terms of tissue distribution, characteristic constituent of osteoclasts and some mononuclear preosteoclasts. Preferentially expressed in skeletal tissues.

It localises to the lysosome. The enzyme catalyses a phosphate monoester + H2O = an alcohol + phosphate. Functionally, may play a role in the process of bone resorption. The osteoclastic trap acts on nucleotide tri- and diphosphates with higher affinity, compared with other substrates. The protein is Tartrate-resistant acid phosphatase type 5 (Acp5) of Rattus norvegicus (Rat).